The sequence spans 348 residues: Ketol-acid reductoisomerase (NADP(+)) (348 aa).

Residues 2-182 (AKTYYDHDAD…GCTRAGVLET (181 aa)) form the KARI N-terminal Rossmann domain. Residues 25-28 (YGSQ), serine 51, serine 53, and 83-86 (DTAQ) each bind NADP(+). Residue histidine 108 is part of the active site. Glycine 134 lines the NADP(+) pocket. The KARI C-terminal knotted domain maps to 183 to 328 (TFKEETETDL…EKLRAAMPFL (146 aa)). 4 residues coordinate Mg(2+): aspartate 191, glutamate 195, glutamate 227, and glutamate 231. Serine 252 contacts substrate.

Belongs to the ketol-acid reductoisomerase family. The cofactor is Mg(2+).

It carries out the reaction (2R)-2,3-dihydroxy-3-methylbutanoate + NADP(+) = (2S)-2-acetolactate + NADPH + H(+). It catalyses the reaction (2R,3R)-2,3-dihydroxy-3-methylpentanoate + NADP(+) = (S)-2-ethyl-2-hydroxy-3-oxobutanoate + NADPH + H(+). Its pathway is amino-acid biosynthesis; L-isoleucine biosynthesis; L-isoleucine from 2-oxobutanoate: step 2/4. The protein operates within amino-acid biosynthesis; L-valine biosynthesis; L-valine from pyruvate: step 2/4. Its function is as follows. Involved in the biosynthesis of branched-chain amino acids (BCAA). Catalyzes an alkyl-migration followed by a ketol-acid reduction of (S)-2-acetolactate (S2AL) to yield (R)-2,3-dihydroxy-isovalerate. In the isomerase reaction, S2AL is rearranged via a Mg-dependent methyl migration to produce 3-hydroxy-3-methyl-2-ketobutyrate (HMKB). In the reductase reaction, this 2-ketoacid undergoes a metal-dependent reduction by NADPH to yield (R)-2,3-dihydroxy-isovalerate. The polypeptide is Ketol-acid reductoisomerase (NADP(+)) (Acidobacterium capsulatum (strain ATCC 51196 / DSM 11244 / BCRC 80197 / JCM 7670 / NBRC 15755 / NCIMB 13165 / 161)).